The primary structure comprises 72 residues: Translation initiation factor IF-1 (72 aa).

The S1-like domain maps to 1-72 (MAKEDTLEFP…TKGRINYRFK (72 aa)).

It belongs to the IF-1 family. As to quaternary structure, component of the 30S ribosomal translation pre-initiation complex which assembles on the 30S ribosome in the order IF-2 and IF-3, IF-1 and N-formylmethionyl-tRNA(fMet); mRNA recruitment can occur at any time during PIC assembly.

It localises to the cytoplasm. Its function is as follows. One of the essential components for the initiation of protein synthesis. Stabilizes the binding of IF-2 and IF-3 on the 30S subunit to which N-formylmethionyl-tRNA(fMet) subsequently binds. Helps modulate mRNA selection, yielding the 30S pre-initiation complex (PIC). Upon addition of the 50S ribosomal subunit IF-1, IF-2 and IF-3 are released leaving the mature 70S translation initiation complex. In Roseobacter denitrificans (strain ATCC 33942 / OCh 114) (Erythrobacter sp. (strain OCh 114)), this protein is Translation initiation factor IF-1.